Here is a 199-residue protein sequence, read N- to C-terminus: Cytochrome c oxidase subunit 2 (199 aa).

Residues 1–13 (AICSLVLYLLTLM) traverse the membrane as a helical segment. The Mitochondrial matrix portion of the chain corresponds to 14 to 26 (LMEKLSSNTVDAQ). Residues 27-54 (EVELIWTILPAIVLILLALPSLQILYMM) traverse the membrane as a helical segment. Residues 55–199 (DEIDEPDLTL…SSLLSASSSL (145 aa)) are Mitochondrial intermembrane-facing. Residues histidine 128, cysteine 163, glutamate 165, cysteine 167, histidine 171, and methionine 174 each contribute to the Cu cation site. Glutamate 165 is a Mg(2+) binding site.

Belongs to the cytochrome c oxidase subunit 2 family. As to quaternary structure, component of the cytochrome c oxidase (complex IV, CIV), a multisubunit enzyme composed of 14 subunits. The complex is composed of a catalytic core of 3 subunits MT-CO1, MT-CO2 and MT-CO3, encoded in the mitochondrial DNA, and 11 supernumerary subunits COX4I, COX5A, COX5B, COX6A, COX6B, COX6C, COX7A, COX7B, COX7C, COX8 and NDUFA4, which are encoded in the nuclear genome. The complex exists as a monomer or a dimer and forms supercomplexes (SCs) in the inner mitochondrial membrane with NADH-ubiquinone oxidoreductase (complex I, CI) and ubiquinol-cytochrome c oxidoreductase (cytochrome b-c1 complex, complex III, CIII), resulting in different assemblies (supercomplex SCI(1)III(2)IV(1) and megacomplex MCI(2)III(2)IV(2)). Found in a complex with TMEM177, COA6, COX18, COX20, SCO1 and SCO2. Interacts with TMEM177 in a COX20-dependent manner. Interacts with COX20. Interacts with COX16. It depends on Cu cation as a cofactor.

Its subcellular location is the mitochondrion inner membrane. The enzyme catalyses 4 Fe(II)-[cytochrome c] + O2 + 8 H(+)(in) = 4 Fe(III)-[cytochrome c] + 2 H2O + 4 H(+)(out). In terms of biological role, component of the cytochrome c oxidase, the last enzyme in the mitochondrial electron transport chain which drives oxidative phosphorylation. The respiratory chain contains 3 multisubunit complexes succinate dehydrogenase (complex II, CII), ubiquinol-cytochrome c oxidoreductase (cytochrome b-c1 complex, complex III, CIII) and cytochrome c oxidase (complex IV, CIV), that cooperate to transfer electrons derived from NADH and succinate to molecular oxygen, creating an electrochemical gradient over the inner membrane that drives transmembrane transport and the ATP synthase. Cytochrome c oxidase is the component of the respiratory chain that catalyzes the reduction of oxygen to water. Electrons originating from reduced cytochrome c in the intermembrane space (IMS) are transferred via the dinuclear copper A center (CU(A)) of subunit 2 and heme A of subunit 1 to the active site in subunit 1, a binuclear center (BNC) formed by heme A3 and copper B (CU(B)). The BNC reduces molecular oxygen to 2 water molecules using 4 electrons from cytochrome c in the IMS and 4 protons from the mitochondrial matrix. The polypeptide is Cytochrome c oxidase subunit 2 (MT-CO2) (Dromaius novaehollandiae (Emu)).